Here is a 166-residue protein sequence, read N- to C-terminus: 2-amino-4-hydroxy-6-hydroxymethyldihydropteridine pyrophosphokinase (166 aa).

The protein belongs to the HPPK family.

It catalyses the reaction 6-hydroxymethyl-7,8-dihydropterin + ATP = (7,8-dihydropterin-6-yl)methyl diphosphate + AMP + H(+). Its pathway is cofactor biosynthesis; tetrahydrofolate biosynthesis; 2-amino-4-hydroxy-6-hydroxymethyl-7,8-dihydropteridine diphosphate from 7,8-dihydroneopterin triphosphate: step 4/4. Catalyzes the transfer of pyrophosphate from adenosine triphosphate (ATP) to 6-hydroxymethyl-7,8-dihydropterin, an enzymatic step in folate biosynthesis pathway. This Streptococcus pyogenes serotype M1 protein is 2-amino-4-hydroxy-6-hydroxymethyldihydropteridine pyrophosphokinase (folK).